The sequence spans 862 residues: DNA gyrase subunit A (862 aa).

Residues 38 to 501 enclose the Topo IIA-type catalytic domain; the sequence is LPDARDGLKP…DYDDIDVEDL (464 aa). The active-site O-(5'-phospho-DNA)-tyrosine intermediate is the Tyr126. A GyrA-box motif is present at residues 528–534; the sequence is QKRGGKG. The disordered stretch occupies residues 843-862; the sequence is KEESDDDDIVADDTQEQDME. A compositionally biased stretch (acidic residues) spans 845 to 862; sequence ESDDDDIVADDTQEQDME.

Belongs to the type II topoisomerase GyrA/ParC subunit family. Heterotetramer, composed of two GyrA and two GyrB chains. In the heterotetramer, GyrA contains the active site tyrosine that forms a transient covalent intermediate with DNA, while GyrB binds cofactors and catalyzes ATP hydrolysis.

The protein resides in the cytoplasm. It catalyses the reaction ATP-dependent breakage, passage and rejoining of double-stranded DNA.. Its function is as follows. A type II topoisomerase that negatively supercoils closed circular double-stranded (ds) DNA in an ATP-dependent manner to modulate DNA topology and maintain chromosomes in an underwound state. Negative supercoiling favors strand separation, and DNA replication, transcription, recombination and repair, all of which involve strand separation. Also able to catalyze the interconversion of other topological isomers of dsDNA rings, including catenanes and knotted rings. Type II topoisomerases break and join 2 DNA strands simultaneously in an ATP-dependent manner. The polypeptide is DNA gyrase subunit A (Campylobacter fetus).